Consider the following 465-residue polypeptide: Protein Loquacious (465 aa).

The tract at residues 1 to 337 (MDQENFHGSS…DSICGELEGE (337 aa)) is necessary for enhancing pre-miRNA processing by Dcr-1. The interval 1–379 (MDQENFHGSS…TLKNATGKKL (379 aa)) is not required for interaction with Dcr-1. Residues 1–392 (MDQENFHGSS…QKTCLKNNKI (392 aa)) are important for homodimerization and interaction with Dcr-1. The sufficient for binding RNA stretch occupies residues 129–211 (NGLAMKTPVS…DKLIGAQLPE (83 aa)). Positions 129–322 (NGLAMKTPVS…WMRLQETPID (194 aa)) are necessary for promoting preferential binding of Dcr-2 to the less stably base paired ends of siRNAs. Residues 135–206 (TPVSILQELL…ARALIDKLIG (72 aa)) enclose the DRBM 1 domain. The interval 209–249 (LPESPSSSAGPSVTGLTVAGSGGDGNANATGGGDASDKTVG) is enables simultaneous binding of both DRBM 1 and 2 domains to dsRNA. A disordered region spans residues 210 to 246 (PESPSSSAGPSVTGLTVAGSGGDGNANATGGGDASDK). A compositionally biased stretch (polar residues) spans 211 to 223 (ESPSSSAGPSVTG). Residues 220 to 465 (SVTGLTVAGS…LEYLKIMTKK (246 aa)) form a necessary and sufficient for enhancing processing of pre-miRNAs by Dcr-1 region. The segment covering 228–242 (GSGGDGNANATGGGD) has biased composition (gly residues). The tract at residues 245–322 (DKTVGNPIGW…WMRLQETPID (78 aa)) is sufficient for binding RNA. The 69-residue stretch at 250–318 (NPIGWLQEMC…AHRMWMRLQE (69 aa)) folds into the DRBM 2 domain. Residues 308 to 309 (AA) are necessary for binding pre-miRNA. The interval 338–359 (PRSSENYYGELKDISVPTLTTQ) is required for binding to Dcr-2 and to fully enhance Dcr-2 mediated cleavage of 3' overhanging termini (3'ovr) and blunt termini (BLT) dsRNAs. However, this region is dispensable for binding the dsRNA substrates. The necessary for interaction with Dcr-1 stretch occupies residues 340–465 (SSENYYGELK…LEYLKIMTKK (126 aa)). Residues 392–463 (IDYIKLLGEI…NALEYLKIMT (72 aa)) are sufficent for binding to Dcr-1. The DRBM 3 domain occupies 393–461 (DYIKLLGEIA…AQNALEYLKI (69 aa)).

As to quaternary structure, homodimer. In terms of assembly, interacts with dicer enzyme Dcr-1. Component of the miRNA-directed RNA-induced loading complex (miRLC), composed of at least Dcr-1, AGO1 and loqs isoform PB (loqs-PB), which processes pre-miRNAs and loads the resulting miRNAs into the Argonaute 1 (AGO1)-containing RNA-induced silencing complex (miRISC) to target the selective destruction of homologous RNAs. Interacts (via DRBM 3 domain) with dicer enzyme Dcr-1 (via helicase domain). Different regions of the Dcr-1-loqs-PB heterodimer collaborate to recognize, bind and position the pre-miRNA for Dcr-1 mediated cleavage. In the absence of miRNA substrates, the heterodimer favors a closed, catalytically incompetent, conformation, whereas binding of authentic pre-miRNA substrates stabilizes the relatively rare open, catalytically competent, conformation of the heterodimer. During substrate recognition, the Dcr-1 PAZ domain and pre-miRNA interact with the DRBM 1 domain of loqs-PB, which likely contributes to substrate recognition and stabilization. At the miRNA binding stage, the Dcr-1 DRBM domain and the loqs-PB DRBM domains then bind the pre-miRNA in tandem to form a tight 'belt' around the pre-miRNA stem, the pre-miRNA loop is docked in the loop-binding region formed by DUF283, DRBM and part of the helicase domain of Dcr-1, and the loqs-PB DRBM 1 and the wing domain of Dcr-1 act together to bind the 5' and 3' pre-miRNA termini within the PAZ and platform domains of Dcr-1. These interactions between the proteins and their pre-miRNA substrate stabilize a distorted form of the pre-miRNA and position the scissile phosphodiester bonds of the pre-miRNA at the RNase III catalytic cleavage sites of Dcr-1. Following Dcr-1 mediated cleavage, the miRNA duplex remains bound to loqs-PB DRBM 1, which dissociates from the Dcr-1 RNase III 1 domain but remains in contact with the PAZ and wing domains suggesting that the heterodimer presents the mature miRNA to AGO2 for loading into the RNA-induced silencing complex (miRISC). As to quaternary structure, able to interact with dicer enzyme Dcr-1. However, the relevance of such an interaction is unclear in vivo and another report found that it did not interact with Dcr-1. In terms of assembly, monomer. Interacts (via C-terminus) with dicer enzyme Dcr-2 (via N-terminus); interaction is required for RNAi activity in producing siRNAs from a subset of endo- and exo-dsRNAs, and in the alternative siRLC, the interaction enhances the binding preference of the protein for the thermodynamically more stable ends of endogenous siRNAs. Interaction with Dcr-2 is RNA independent, however the isoform must bind both dsRNA and Dcr-2 to enhance Dcr-2 cleavage activity. Does not interact with Dcr-1. Strong expression in males and females. Expression in ovaries is relatively weak. As to expression, strong expression in females and relatively weak expression in males. Strong expression in ovaries.

Its subcellular location is the cytoplasm. The protein localises to the cytosol. Its function is as follows. Double-stranded RNA-binding protein which can function in gene silencing by acting with Dcr-1 to enhance its ATP-independent processing of a specific subset of precursor micro-RNAs (pre-miRNAs) to mature miRNAs. Some reports found it was able to enhance the efficiency of pre-miRNA processing by Dcr-1, and can shift the cleavage site of Dcr-1 altering the length of the mature miRNAs produced by Dcr-1 alone. However, in contrast to isoform PB, it is not necessary or sufficient for enhancing miRNA biogenesis, and is not required for development or female germline stem cell (GSC) maintenance. Another report also found that it decreases binding of Dcr-1 to the miRNA substrate let-7. Double-stranded RNA-binding protein which functions in gene silencing by acting with Dcr-1 to enhance its ATP-independent processing of a specific subset of precursor micro-RNAs (pre-miRNAs) to mature miRNAs. Function is essential for development and female germline stem cell (GSC) maintenance. Functions in miRNA-mediated gene silencing by enhancing the binding affinity and specific pre-miRNA processing activity of Dcr-1, and as part of the loqs-PB-Dcr-1 complex, is involved in substrate discrimination, correctly positioning the pre-miRNA in the Dcr-1 catalytic center for cleavage, and miRNA loading into the Argonaute 1 (Ago1)-containing RNA-induced silencing complex (miRISC). Increases the binding affinity of Dcr-1 to pre-miRNAs, thereby increasing dicing efficiency and broadening the range of substrates that can be processed by the dicer. It may also confer the substrate specificity of Dcr-1 towards pre-miRNAs, as in its absence Dcr-1 displays siRNA-generating activity towards long dsRNA substrates. It can also shift the cleavage site of Dcr-1 for a small number of pre-miRNAs, changing the length of the mature miRNAs produced by Dcr-1 alone. Increases the range of pre-miRNAs that can be processed by Dcr-1, by enhancing the dicing of suboptimal hairpin substrates including ones with mismatches at the dicing site. This function may also promote the generation of novel miRNA genes as it appears to have an important role in processing evolutionarily young miRNA genes, suggesting that it may also enhance dicing of substrates that have not acquired hairpin features required for efficient miRNA processing. As newly emerged miRNAs can have deleterious or beneficial effects on fitness, this function is likely part of a regulatory system that prevents excessive emergence of active miRNA genes and thus keeps them within an optimal range. Also forms a RISC loading complex (miRLC) with Dcr-1 to mediate Ago1-loading of mature miRNAs into the RNA-induced silencing complex (miRISC). In female ovaries, required for Dcr-1 to generate the twenty-three nucleotide isomiR variant of miR-307a which is able to repress its targets Gk2 and tara. Functionally, double-stranded RNA-binding protein which has an essential role in gene silencing (RNAi) by acting with Dcr-2 to enhance its ATP-dependent processing of a subset of endogenous (endo) and exogenous (exo) dsRNAs into short interfering RNAs (siRNAs). Functions in RNAi by increasing the initial binding affinity of Dcr-2 to certain dsRNA substrates, and in the absence of r2d2, may also function in siRNA loading into the Argonaute 2 (AGO2)-containing RNA-induced silencing complex (siRISC) and guide strand selection for target silencing by the siRISC. Promotes Dcr-2 cleavage of a subset of dsRNAs, including endo-dsRNAs derived from convergent transcription, inverted repeats and transposons. Also enables Dcr-2 to produce hairpin-derived endo-siRNAs in the presence of cellular inhibitory inorganic phosphate, likely by increasing the binding affinity of the enzyme to the hairpin dsRNAs allowing the dsRNA to displace phosphate bound to Dcr-2. According to many reports, the cleavage reaction mode of Dcr-2 changes according to the termini of the dsRNA substrate, with the enzyme displaying a preference for processing blunt termini (BLT), likely non-self dsRNAs, over dsRNAs with 2 nucleotides 3' overhanging (3'ovr) termini, which are typically the structure of endo-dsRNAs. According to many reports, interaction with Loqs-PD modifies the molecular recognition mechanisms of Dcr-2 towards sub-optimal 3'ovr dsRNA substrates and thus enables the dicer to cleave endo-dsRNA templates with diverse termini. However, according to another report, the mode of cleavage reaction is not affected by the presence or absence of loqs-PD. In the absence of r2d2, may also form an alternative RISC loading complex (siRLC) with Dcr-2 to mediate AGO2-loading of endo- and exo-siRNAs into the RNA-induced silencing complex (siRISC). Many reports suggest that loqs-PD and r2d2 function independently with dcr-2 in distinct siRNA pathways, and may even compete for binding to the enzyme. Loaded siRNAs serve as a guide to direct the siRISC to complementary RNAs to degrade them or prevent their translation. The siRLC plays an important role in the ATP-dependent asymmetry sensing of the duplex, and is therefore also responsible for the selection of the strand that ultimately acts as the guide siRNA for the siRISC. Thermodynamically asymmetric endo-siRNAs can be pre-oriented in the siRLC by the Loqs-PD and DCr-2 complex, which preferentially binds to the most thermodynamically stable strand prior to loading into the siRISC. Appears to be involved in promoting double-strand breaks (DSBs) following exposure to a low-dose/dose-rate (LDR) of ionizing radiation. This is Protein Loquacious from Drosophila melanogaster (Fruit fly).